Here is a 33-residue protein sequence, read N- to C-terminus: Cecropin-B (33 aa).

Lys-21 bears the 5-hydroxylysine mark.

As to quaternary structure, monomer. In terms of tissue distribution, hemolymph.

The protein localises to the secreted. In terms of biological role, cecropins have lytic and antibacterial activity against several Gram-positive and Gram-negative bacteria. Also has activity against fungi. The protein is Cecropin-B of Heliothis virescens (Tobacco budworm moth).